A 174-amino-acid chain; its full sequence is Small ribosomal subunit protein uS5 (174 aa).

The 64-residue stretch at 16-79 folds into the S5 DRBM domain; that stretch reads FSELIVSVRR…NAAKKNMIRV (64 aa).

The protein belongs to the universal ribosomal protein uS5 family. Part of the 30S ribosomal subunit. Contacts proteins S4 and S8.

With S4 and S12 plays an important role in translational accuracy. Functionally, located at the back of the 30S subunit body where it stabilizes the conformation of the head with respect to the body. This Ehrlichia canis (strain Jake) protein is Small ribosomal subunit protein uS5.